Reading from the N-terminus, the 699-residue chain is Fervidolysin (699 aa).

The signal sequence occupies residues 1-21 (MRKVLLIASIVALILALFSCA). A propeptide spanning residues 22–149 (NPSFEPRSKA…MYKIRKPGLN (128 aa)) is cleaved from the precursor. Glutamate 157 contributes to the Ca(2+) binding site. Residues 163–465 (LWGLEAIGVT…YGLVKLDAAL (303 aa)) enclose the Peptidase S8 domain. Residue aspartate 190 is the Charge relay system of the active site. Aspartate 199 is a binding site for Ca(2+). Histidine 228 acts as the Charge relay system in catalysis. 4 residues coordinate Ca(2+): lysine 239, aspartate 241, lysine 243, and isoleucine 245. Serine 409 serves as the catalytic Charge relay system.

Belongs to the peptidase S8 family. In terms of processing, undergoes auto-proteolytic processing. Once cleaved, the propeptide can remain associated with the protease and blocks its activity. The physiological activation of fervidolysin is proposed to be achieved through the stepwise removal of the propeptide accomplished by several proteolytic cleavages that may not be autolytic.

It is found in the cell surface. With respect to regulation, is inhibited by phenylmethylsulfonyl fluoride and 3,4-dichloroisocoumarin. EDTA and iodoacetate (1 to 5 mM) have only little effect on the enzyme activity. In terms of biological role, protease able to degrade keratin into peptides. Is responsible for keratinolysis by F.pennivorans, which allows this bacterium to grow on native feathers. In Fervidobacterium pennivorans, this protein is Fervidolysin.